Here is a 417-residue protein sequence, read N- to C-terminus: GPI mannosyltransferase 2 (417 aa).

9 consecutive transmembrane segments (helical) span residues 10–30 (FLIINVTFFAVKLLQFGLVWL), 104–124 (IVLKAVSFNLLLHYLSTWIVY), 142–162 (LALTTSVLFILSSAAGFLISV), 167–187 (IAFTFSLLGMLFRQWSISFDV), 206–226 (FCFAFAFLNRSNCLLLGLFYV), 239–259 (ITSIFYPILSGTILFGVFVYF), 312–332 (IPNFLFGLPNIVITWNAITYF), 344–364 (YIWIARIFLFIMVFLANVQII), and 394–414 (YYVMWLLIWIPTQTALFACFL).

It belongs to the PIGV family.

It is found in the endoplasmic reticulum membrane. It functions in the pathway glycolipid biosynthesis; glycosylphosphatidylinositol-anchor biosynthesis. In terms of biological role, mannosyltransferase involved in glycosylphosphatidylinositol-anchor biosynthesis. Transfers the second mannose to the glycosylphosphatidylinositol during GPI precursor assembly. This chain is GPI mannosyltransferase 2 (GPI18), found in Kluyveromyces lactis (strain ATCC 8585 / CBS 2359 / DSM 70799 / NBRC 1267 / NRRL Y-1140 / WM37) (Yeast).